Here is a 256-residue protein sequence, read N- to C-terminus: uncharacterized protein (256 aa).

Disordered stretches follow at residues 1 to 38 (MGKT…PNRD) and 51 to 75 (PRPS…RCPQ).

This is an uncharacterized protein from Homo sapiens (Human).